The following is a 193-amino-acid chain: RNA pyrophosphohydrolase (193 aa).

Positions 6-149 (GFRPNVGIIL…KRDVYQRALQ (144 aa)) constitute a Nudix hydrolase domain. The short motif at 38 to 59 (GGIKFGETPEQAMFRELEEEVG) is the Nudix box element. Residues 174 to 193 (THSARKTDEPSTEQTKPNNE) are disordered.

Belongs to the Nudix hydrolase family. RppH subfamily. The cofactor is a divalent metal cation.

In terms of biological role, accelerates the degradation of transcripts by removing pyrophosphate from the 5'-end of triphosphorylated RNA, leading to a more labile monophosphorylated state that can stimulate subsequent ribonuclease cleavage. The protein is RNA pyrophosphohydrolase of Herminiimonas arsenicoxydans.